A 334-amino-acid chain; its full sequence is Putative ankyrin repeat protein RBE_0347 (334 aa).

ANK repeat units lie at residues 80–90 (EQGINPNIQDS), 91–120 (SGNT…NPNI), 124–161 (SDNT…LKDF), and 162–191 (VGFT…DINV).

The chain is Putative ankyrin repeat protein RBE_0347 from Rickettsia bellii (strain RML369-C).